A 555-amino-acid polypeptide reads, in one-letter code: MRSGLFGVLRWTAVGLVATLVASLALTACSGSAAGEIVYVVDGALGTYNTNTIVGAASAGAQAFARTLIGFGYHGPDGQIVADHDFGTITVVGGVPLVLDYQIADNAVYSDGKQVTCDDLVLTWAAQSGRFPGFDAATQAGYRDIANIECLAGQKKSRVFFVPDRSVVDYEQLFAATSMMPSHVIADQLNIDVTEALLTHNATLVEQIARLWNTTWDLKPAVDLRRFPSSGPYKIESVLNGGAVVLVANDRWWGLKATTKRITVRPQEADIQDRVNNRSVDVVDVAVGSSGSLATPDNYARIDSPSAGIEQLIFAPQGLLAAAAARRALALCTPRDVVARDAGLSIANSRLSPATEDAIAAADGAREAGQFSKADPAAAHDALSGETLPVRIGYQGPNARLAATVGTIAKACAVAGISVSSVTLDSSTDPSGPQALRDGKIDVLLASTGGATGSGSSGSSSMDAYDLHTGNGNNLSGYANAQVDNNIGALAVSADPAERVRLLADSAPVLWADMPTLPLYRQQRMLLMSKTMYAVTRNPTRWGAGWNMDRWALVR.

An N-terminal signal peptide occupies residues 1–28; sequence MRSGLFGVLRWTAVGLVATLVASLALTA. A lipid anchor (N-palmitoyl cysteine) is attached at Cys-29. Cys-29 is lipidated: S-diacylglycerol cysteine.

The protein to M.tuberculosis Rv2585c and M.bovis Mb2616c.

It localises to the cell membrane. This is an uncharacterized protein from Mycobacterium leprae (strain TN).